Here is an 824-residue protein sequence, read N- to C-terminus: Acyl-homoserine lactone acylase QuiP (824 aa).

Residues 1–26 (MASPALRHFLPRFGAAAAAASFLSLA) form the signal peptide. The active-site Nucleophile is the serine 264.

The protein belongs to the peptidase S45 family. As to quaternary structure, heterodimer of an alpha subunit and a beta subunit processed from the same precursor.

It is found in the periplasm. The catalysed reaction is an N-acyl-L-homoserine lactone + H2O = L-homoserine lactone + a carboxylate. Its function is as follows. Catalyzes the deacylation of acyl-homoserine lactone (AHL or acyl-HSL), releasing homoserine lactone (HSL) and the corresponding fatty acid. Possesses a specificity for the degradation of long-chain acyl-HSLs (side chains of seven or more carbons in length). The polypeptide is Acyl-homoserine lactone acylase QuiP (quiP) (Pseudomonas syringae pv. syringae (strain B728a)).